We begin with the raw amino-acid sequence, 368 residues long: Chaperone protein DnaJ (368 aa).

One can recognise a J domain in the interval 5 to 70 (DYYQVLGVPR…KKRKLYDTHG (66 aa)). The CR-type zinc finger occupies 124-201 (GVERQIQIPT…CNGAGRVEDH (78 aa)). The Zn(2+) site is built by Cys-137, Cys-140, Cys-153, Cys-156, Cys-175, Cys-178, Cys-189, and Cys-192. 4 CXXCXGXG motif repeats span residues 137–144 (CTHCHGSG), 153–160 (CGTCRGSG), 175–182 (CPHCGGRG), and 189–196 (CKVCNGAG).

It belongs to the DnaJ family. As to quaternary structure, homodimer. The cofactor is Zn(2+).

It is found in the cytoplasm. Its function is as follows. Participates actively in the response to hyperosmotic and heat shock by preventing the aggregation of stress-denatured proteins and by disaggregating proteins, also in an autonomous, DnaK-independent fashion. Unfolded proteins bind initially to DnaJ; upon interaction with the DnaJ-bound protein, DnaK hydrolyzes its bound ATP, resulting in the formation of a stable complex. GrpE releases ADP from DnaK; ATP binding to DnaK triggers the release of the substrate protein, thus completing the reaction cycle. Several rounds of ATP-dependent interactions between DnaJ, DnaK and GrpE are required for fully efficient folding. Also involved, together with DnaK and GrpE, in the DNA replication of plasmids through activation of initiation proteins. This is Chaperone protein DnaJ from Xylella fastidiosa (strain 9a5c).